We begin with the raw amino-acid sequence, 404 residues long: MEDLVCVGITHKEAEVEELEKARFESDEAVRDIVESFGLSGCVLLQTCNRVEVYASGARDRAEELGDLIHDDAWVKRGSEAVRHLFRVACGLESMMVGEQEILRQVKKAYDRAARLGTLDEALKIVFRRAINLGKRAREETRISEGAVSIGSAAVELAERELGSLHDKTVLVVGAGEMGKTVAKSLVDRGVRAVLVANRTYERAVELARDLGGEAVRFDELVDHLARSDVVVSATAAPHPVIHVDDVREALRKRDRRSPILIIDIANPRDVEEGVENIEDVEVRTIDDLRVIARENLERRRKEIPKVEKLIEEELSTVEEELEKLKERRLVADVAKSLHEIKDRELERALRRLKTGDPENVLQDFAEAYTKRLINVLTSAIMELPDEYRRAACRALRRASELNG.

Substrate is bound by residues 47–50 (TCNR), Ser94, 99–101 (EQE), and Gln105. Catalysis depends on Cys48, which acts as the Nucleophile. An NADP(+)-binding site is contributed by 174–179 (GAGEMG).

Homotetramer.

It catalyses the reaction (S)-4-amino-5-oxopentanoate + tRNA(Glu) + NADP(+) = L-glutamyl-tRNA(Glu) + NADPH + H(+). It participates in porphyrin-containing compound metabolism; protoporphyrin-IX biosynthesis; 5-aminolevulinate from L-glutamyl-tRNA(Glu): step 1/2. Its activity is regulated as follows. Inhibited by heavy metal compounds, Zn(2+), and heme. Also competitively inhibited by glutamycin. In terms of biological role, catalyzes the NADPH-dependent reduction of glutamyl-tRNA(Glu) to glutamate 1-semialdehyde (GSA). In the absence of NADPH, exhibits substrate esterase activity, leading to the release of glutamate from tRNA. This is Glutamyl-tRNA reductase (hemA) from Methanopyrus kandleri (strain AV19 / DSM 6324 / JCM 9639 / NBRC 100938).